Reading from the N-terminus, the 197-residue chain is LexA repressor (197 aa).

Residues 28–47 constitute a DNA-binding region (H-T-H motif); that stretch reads VREIARRFRITPRGALLHLI. Catalysis depends on for autocatalytic cleavage activity residues Ser-119 and Lys-156.

This sequence belongs to the peptidase S24 family. As to quaternary structure, homodimer.

It carries out the reaction Hydrolysis of Ala-|-Gly bond in repressor LexA.. Its function is as follows. Represses a number of genes involved in the response to DNA damage (SOS response), including recA and lexA. In the presence of single-stranded DNA, RecA interacts with LexA causing an autocatalytic cleavage which disrupts the DNA-binding part of LexA, leading to derepression of the SOS regulon and eventually DNA repair. In Thermotoga petrophila (strain ATCC BAA-488 / DSM 13995 / JCM 10881 / RKU-1), this protein is LexA repressor.